A 275-amino-acid polypeptide reads, in one-letter code: Intercellular adhesion molecule 2 (275 aa).

Residues 1-24 (MSSFSYRTLTVALFALICCPGSDE) form the signal peptide. Residues 25 to 223 (KVFEVHVRPK…EIYEPVSDSQ (199 aa)) lie on the Extracellular side of the membrane. Residues 41 to 98 (KGSLKVNCSTTCNQPEVGGLETSLDKILLDEQAQWKHYLVSNISHDTVLQCHFTCSGK) enclose the Ig-like C2-type 1 domain. Asparagine 47, asparagine 82, asparagine 105, asparagine 153, asparagine 176, and asparagine 187 each carry an N-linked (GlcNAc...) asparagine glycan. Intrachain disulfides connect cysteine 48-cysteine 91 and cysteine 52-cysteine 95. Residues 127-197 (GKSFTIECRV…FSCLAVLDLM (71 aa)) form the Ig-like C2-type 2 domain. Cysteine 134 and cysteine 190 form a disulfide bridge. A helical membrane pass occupies residues 224 to 248 (MVIIVTVVSVLLSLFVTSVLLCFIF). The Cytoplasmic portion of the chain corresponds to 249–275 (GQHLRQQRMGTYGVRAAWRRLPQAFRP). The interval 251 to 275 (HLRQQRMGTYGVRAAWRRLPQAFRP) is required for interaction with EZR, MSN and RDX and co-localization to microvilli.

The protein belongs to the immunoglobulin superfamily. ICAM family. In terms of assembly, interacts with RDX, EZR and MSN.

It is found in the membrane. The protein localises to the cell projection. It localises to the microvillus. In terms of biological role, ICAM proteins are ligands for the leukocyte adhesion protein LFA-1 (integrin alpha-L/beta-2). ICAM2 may play a role in lymphocyte recirculation by blocking LFA-1-dependent cell adhesion. It mediates adhesive interactions important for antigen-specific immune response, NK-cell mediated clearance, lymphocyte recirculation, and other cellular interactions important for immune response and surveillance. This is Intercellular adhesion molecule 2 (ICAM2) from Pan troglodytes (Chimpanzee).